The primary structure comprises 1516 residues: Alpha-2-macroglobulin homolog (1516 aa).

The N-terminal stretch at 1–26 (MSNLRRFSRSLAVAALVLLPFAAVQA) is a signal peptide.

This sequence belongs to the protease inhibitor I39 (alpha-2-macroglobulin) family. Bacterial alpha-2-macroglobulin subfamily.

This Pseudomonas aeruginosa (strain ATCC 15692 / DSM 22644 / CIP 104116 / JCM 14847 / LMG 12228 / 1C / PRS 101 / PAO1) protein is Alpha-2-macroglobulin homolog.